Consider the following 424-residue polypeptide: MNSPSSSSSFCSSSSSPSSLVLYSPDTCQVCGQKSHGKHFGAVTCRACAAFFRRCGSANNFKPCRRNMNCEFLKNGWFNCKPCRLKKCQDVGMTIENFQFDRDSFSPKKAKIALENFHNQVPFSIATFTGRSNLIVISAPTEEECIPKCYIDVQFLIDKLSNVLKEGPEVPLHTPNALEKLALGLQIIRGRKRELKLITKLGKEETLGLWQDDMMKVAKWLTYFDDFQQLSHRMRSEMLKGMWKVWSRLETLALTAMGRRLMICQKDMIMTHTEKEQVMAHPKQIEVDISWCSRYTLEQLRFFADSDLDDRNEQVIQAMMELQPTDVELSYMMCQACLHYAGKRYQGEVLEIAERFQETLSNHLHDYYVNRMNMPQYSMRVANLMKINNHIQLDIYRGRVKYDLARVFDVFYLEFSHPEVFIDL.

Residues 1 to 19 (MNSPSSSSSFCSSSSSPSS) show a composition bias toward low complexity. Positions 1–20 (MNSPSSSSSFCSSSSSPSSL) are disordered. Residues 25–100 (PDTCQVCGQK…VGMTIENFQF (76 aa)) constitute a DNA-binding region (nuclear receptor). 2 NR C4-type zinc fingers span residues 28-55 (CQVC…FRRC) and 64-88 (CRRN…LKKC). The NR LBD domain maps to 169–424 (EVPLHTPNAL…FSHPEVFIDL (256 aa)).

Belongs to the nuclear hormone receptor family.

The protein localises to the nucleus. In terms of biological role, orphan nuclear receptor. In Caenorhabditis elegans, this protein is Nuclear hormone receptor family member nhr-55 (nhr-55).